The primary structure comprises 475 residues: Melanopsin (475 aa).

The Extracellular portion of the chain corresponds to 1–21 (MGTQHRIKVDVPDRVLYTVGS). A helical membrane pass occupies residues 22–42 (CVLVIGSIGITGNLLVLYAFY). Topologically, residues 43-53 (SNKRLRTPANY) are cytoplasmic. Residues 54–74 (FIMNLAASDFLMSATQAPICF) traverse the membrane as a helical segment. At 75-90 (LNSMHTEWILGDIGCN) the chain is on the extracellular side. Cys89 and Cys167 are joined by a disulfide. Residues 91–111 (FYVFCGALFGITSMMTLLAIS) traverse the membrane as a helical segment. The Cytoplasmic segment spans residues 112–134 (VDRYCVITKPLQSIKRSSKKRSC). Residues 135–155 (IIIAFVWLYSLGWSVCPLFGW) form a helical membrane-spanning segment. Residues 156-187 (SSYIPEGLMISCTWDYVSYSPANRSYTMMLCC) are Extracellular-facing. Asn178 carries N-linked (GlcNAc...) asparagine glycosylation. The chain crosses the membrane as a helical span at residues 188-208 (FVFFIPLIIIFHCYLFMFLAI). The Cytoplasmic segment spans residues 209 to 240 (RSTGRNVQKLGSTYNRKSNVSQSVKSEWKLAK). Residues 241–261 (IAFVAIVVFVLSWSPYACVTL) traverse the membrane as a helical segment. Topologically, residues 262-276 (IAWAGYAKTLNPYSK) are extracellular. Residues 277–297 (SVPAVIAKASAIYNPIIYAII) form a helical membrane-spanning segment. The residue at position 284 (Lys284) is an N6-(retinylidene)lysine. The Cytoplasmic segment spans residues 298–475 (HPRYRRTIRS…EQHQMEASSH (178 aa)). Disordered regions lie at residues 370–390 (VEAA…KQAE) and 445–475 (PFGL…ASSH). Basic residues predominate over residues 375–384 (KKQQPHRSRS). Over residues 445–454 (PFGLNSSSTE) the composition is skewed to polar residues. Over residues 455–464 (ENADTSDMEV) the composition is skewed to acidic residues. Basic and acidic residues predominate over residues 465-475 (QEQHQMEASSH).

This sequence belongs to the G-protein coupled receptor 1 family. Opsin subfamily. As to expression, highest level in the lateral eye. Low level in the brain.

It localises to the cell membrane. Functionally, photoreceptor implicated in non-image-forming responses to light. May be able to isomerize covalently bound all-trans retinal back to 11-cis retinal. The sequence is that of Melanopsin (OPN4) from Podarcis siculus (Italian wall lizard).